Here is a 248-residue protein sequence, read N- to C-terminus: Aspartate/glutamate leucyltransferase (248 aa).

Belongs to the R-transferase family. Bpt subfamily.

It localises to the cytoplasm. It carries out the reaction N-terminal L-glutamyl-[protein] + L-leucyl-tRNA(Leu) = N-terminal L-leucyl-L-glutamyl-[protein] + tRNA(Leu) + H(+). It catalyses the reaction N-terminal L-aspartyl-[protein] + L-leucyl-tRNA(Leu) = N-terminal L-leucyl-L-aspartyl-[protein] + tRNA(Leu) + H(+). Its function is as follows. Functions in the N-end rule pathway of protein degradation where it conjugates Leu from its aminoacyl-tRNA to the N-termini of proteins containing an N-terminal aspartate or glutamate. The chain is Aspartate/glutamate leucyltransferase from Methylobacterium nodulans (strain LMG 21967 / CNCM I-2342 / ORS 2060).